Reading from the N-terminus, the 512-residue chain is Kelch repeat protein C2 (512 aa).

One can recognise a BTB domain in the interval 2–67 (ESVIFSINGE…IRWKKINITI (66 aa)). The region spanning 102 to 176 (CIRMFNFSKR…LLKWIHKNPN (75 aa)) is the BACK domain. 6 Kelch repeats span residues 216 to 261 (IKHN…LHNC), 262 to 307 (LYII…VNDG), 309 to 354 (LYVI…FVND), 356 to 403 (IYVM…EYDG), 405 to 449 (IYVI…SCGD), and 452 to 498 (LIIA…THKS).

The protein belongs to the poxviruses Kelch family.

The polypeptide is Kelch repeat protein C2 (Vaccinia virus (strain Western Reserve) (VACV)).